Consider the following 339-residue polypeptide: tRNA-specific 2-thiouridylase MnmA (339 aa).

ATP contacts are provided by residues 8 to 15 (AMSGGVDS) and M34. The Nucleophile role is filled by C94. C94 and C188 form a disulfide bridge. ATP is bound at residue G118. The tract at residues 136–138 (KDQ) is interaction with tRNA. The active-site Cysteine persulfide intermediate is the C188. The segment at 290–291 (RY) is interaction with tRNA.

This sequence belongs to the MnmA/TRMU family.

Its subcellular location is the cytoplasm. The catalysed reaction is S-sulfanyl-L-cysteinyl-[protein] + uridine(34) in tRNA + AH2 + ATP = 2-thiouridine(34) in tRNA + L-cysteinyl-[protein] + A + AMP + diphosphate + H(+). Its function is as follows. Catalyzes the 2-thiolation of uridine at the wobble position (U34) of tRNA, leading to the formation of s(2)U34. This chain is tRNA-specific 2-thiouridylase MnmA, found in Nitratiruptor sp. (strain SB155-2).